Here is a 409-residue protein sequence, read N- to C-terminus: Argininosuccinate synthase (409 aa).

ATP-binding positions include 13-21 (AYSGGLDTS) and Ala40. L-citrulline contacts are provided by Tyr91 and Ser96. Position 121 (Gly121) interacts with ATP. 3 residues coordinate L-aspartate: Thr123, Asn127, and Asp128. Asn127 is a binding site for L-citrulline. 5 residues coordinate L-citrulline: Arg131, Ser183, Ser192, Glu268, and Tyr280.

This sequence belongs to the argininosuccinate synthase family. Type 1 subfamily. Homotetramer.

It is found in the cytoplasm. The catalysed reaction is L-citrulline + L-aspartate + ATP = 2-(N(omega)-L-arginino)succinate + AMP + diphosphate + H(+). Its pathway is amino-acid biosynthesis; L-arginine biosynthesis; L-arginine from L-ornithine and carbamoyl phosphate: step 2/3. The sequence is that of Argininosuccinate synthase from Saccharophagus degradans (strain 2-40 / ATCC 43961 / DSM 17024).